A 348-amino-acid polypeptide reads, in one-letter code: Quinolinate synthase (348 aa).

Iminosuccinate-binding residues include H47 and S68. C113 serves as a coordination point for [4Fe-4S] cluster. Residues Y139 to N141 and S156 contribute to the iminosuccinate site. C200 is a binding site for [4Fe-4S] cluster. Iminosuccinate contacts are provided by residues H226–E228 and T243. C297 is a [4Fe-4S] cluster binding site.

It belongs to the quinolinate synthase family. Type 1 subfamily. It depends on [4Fe-4S] cluster as a cofactor.

It localises to the cytoplasm. It catalyses the reaction iminosuccinate + dihydroxyacetone phosphate = quinolinate + phosphate + 2 H2O + H(+). It participates in cofactor biosynthesis; NAD(+) biosynthesis; quinolinate from iminoaspartate: step 1/1. Functionally, catalyzes the condensation of iminoaspartate with dihydroxyacetone phosphate to form quinolinate. In Sodalis glossinidius (strain morsitans), this protein is Quinolinate synthase.